The primary structure comprises 148 residues: Oleosin 16 kDa (148 aa).

Residues 1-21 are disordered; the sequence is MADQHRGVIGGGGYGDRGGQE. Residue alanine 2 is modified to N-acetylalanine. The interval 2-34 is polar; that stretch reads ADQHRGVIGGGGYGDRGGQEQQEKQPFMMTALK. Gly residues predominate over residues 8 to 17; the sequence is VIGGGGYGDR. A hydrophobic region spans residues 35-106; it reads TVTAATAGGS…AALSVFSWMY (72 aa). Helical transmembrane passes span 43 to 63, 66 to 86, and 87 to 107; these read GSML…LTVA, VLVI…LMAA, and GFVT…WMYK.

Belongs to the oleosin family.

It is found in the lipid droplet. It localises to the membrane. In terms of biological role, may have a structural role to stabilize the lipid body during desiccation of the seed by preventing coalescence of the oil. Probably interacts with both lipid and phospholipid moieties of lipid bodies. May also provide recognition signals for specific lipase anchorage in lipolysis during seedling growth. The protein is Oleosin 16 kDa (OLE16) of Oryza sativa subsp. japonica (Rice).